Here is a 125-residue protein sequence, read N- to C-terminus: Putative zinc finger A20 and AN1 domain-containing stress-associated protein 8 (125 aa).

The A20-type zinc-finger motif lies at 2–36 (TGEPSLCIRGCGFFSTSQTKNLCSKCYNDFLKDES). Zn(2+) contacts are provided by Cys-8, Cys-12, Cys-24, Cys-27, Cys-80, Cys-82, His-96, and Cys-98. The segment at 61–106 (LGSKGGCACKKKVGLLGFHCRCGHLFFASHRYPEEHSCPSDYKSAA) adopts an AN1-type; degenerate zinc-finger fold.

Its function is as follows. May be involved in environmental stress response. This Arabidopsis thaliana (Mouse-ear cress) protein is Putative zinc finger A20 and AN1 domain-containing stress-associated protein 8 (SAP8).